Consider the following 419-residue polypeptide: Peptide chain release factor subunit 1 (419 aa).

It belongs to the eukaryotic release factor 1 family. As to quaternary structure, heterodimer of two subunits, one of which binds GTP.

The protein localises to the cytoplasm. Functionally, directs the termination of nascent peptide synthesis (translation) in response to the termination codons UAA, UAG and UGA. The protein is Peptide chain release factor subunit 1 of Methanococcus maripaludis (strain C6 / ATCC BAA-1332).